Here is a 753-residue protein sequence, read N- to C-terminus: Subtilisin-like protease SBT3.17 (753 aa).

A signal peptide spans 1–29 (MGNSFLIADTSSLVIGLLLILNGVFISAA). A propeptide spans 30 to 116 (KHYGLNKIHI…VVPSRVMRLK (87 aa)) (activation peptide). Positions 38 to 115 (HIVHLGAKQH…RVVPSRVMRL (78 aa)) constitute an Inhibitor I9 domain. Asn-97 is a glycosylation site (N-linked (GlcNAc...) asparagine). Residues 120–603 (TFDYLGLLPT…GGLINPEKVT (484 aa)) enclose the Peptidase S8 domain. The Charge relay system role is filled by Asp-150. Asn-161 carries an N-linked (GlcNAc...) asparagine glycan. His-227 (charge relay system) is an active-site residue. N-linked (GlcNAc...) asparagine glycosylation is present at Asn-369. Residue Ser-534 is the Charge relay system of the active site. Asn-639, Asn-704, and Asn-737 each carry an N-linked (GlcNAc...) asparagine glycan.

This sequence belongs to the peptidase S8 family.

It localises to the secreted. The sequence is that of Subtilisin-like protease SBT3.17 from Arabidopsis thaliana (Mouse-ear cress).